The chain runs to 204 residues: UPF0637 protein SaurJH9_1166 (204 aa).

Belongs to the UPF0637 family.

This is UPF0637 protein SaurJH9_1166 from Staphylococcus aureus (strain JH9).